The following is a 150-amino-acid chain: Cytochrome c oxidase subunit 5A, mitochondrial (150 aa).

Residues 1 to 41 (MLGAALRRCAVAATTRAGPRGLLHSARTPGPAAAIQSVRCY) constitute a mitochondrion transit peptide. The SIFI-degron signature appears at 2 to 17 (LGAALRRCAVAATTRA). 2 positions are modified to N6-acetyllysine: lysine 87 and lysine 113. The residue at position 141 (threonine 141) is a Phosphothreonine.

It belongs to the cytochrome c oxidase subunit 5A family. Component of the cytochrome c oxidase (complex IV, CIV), a multisubunit enzyme composed of 14 subunits. The complex is composed of a catalytic core of 3 subunits MT-CO1, MT-CO2 and MT-CO3, encoded in the mitochondrial DNA, and 11 supernumerary subunits COX4I, COX5A, COX5B, COX6A, COX6B, COX6C, COX7A, COX7B, COX7C, COX8 and NDUFA4, which are encoded in the nuclear genome. The complex exists as a monomer or a dimer and forms supercomplexes (SCs) in the inner mitochondrial membrane with NADH-ubiquinone oxidoreductase (complex I, CI) and ubiquinol-cytochrome c oxidoreductase (cytochrome b-c1 complex, complex III, CIII), resulting in different assemblies (supercomplex SCI(1)III(2)IV(1) and megacomplex MCI(2)III(2)IV(2)). Interacts with AFG1L. Interacts with RAB5IF. In response to mitochondrial stress, the precursor protein is ubiquitinated by the SIFI complex in the cytoplasm before mitochondrial import, leading to its degradation. Within the SIFI complex, UBR4 initiates ubiquitin chain that are further elongated or branched by KCMF1.

It localises to the mitochondrion inner membrane. Its pathway is energy metabolism; oxidative phosphorylation. Component of the cytochrome c oxidase, the last enzyme in the mitochondrial electron transport chain which drives oxidative phosphorylation. The respiratory chain contains 3 multisubunit complexes succinate dehydrogenase (complex II, CII), ubiquinol-cytochrome c oxidoreductase (cytochrome b-c1 complex, complex III, CIII) and cytochrome c oxidase (complex IV, CIV), that cooperate to transfer electrons derived from NADH and succinate to molecular oxygen, creating an electrochemical gradient over the inner membrane that drives transmembrane transport and the ATP synthase. Cytochrome c oxidase is the component of the respiratory chain that catalyzes the reduction of oxygen to water. Electrons originating from reduced cytochrome c in the intermembrane space (IMS) are transferred via the dinuclear copper A center (CU(A)) of subunit 2 and heme A of subunit 1 to the active site in subunit 1, a binuclear center (BNC) formed by heme A3 and copper B (CU(B)). The BNC reduces molecular oxygen to 2 water molecules using 4 electrons from cytochrome c in the IMS and 4 protons from the mitochondrial matrix. This chain is Cytochrome c oxidase subunit 5A, mitochondrial (COX5A), found in Gorilla gorilla gorilla (Western lowland gorilla).